The sequence spans 836 residues: Conserved oligomeric Golgi complex subunit 7 (836 aa).

2 coiled-coil regions span residues 29–49 and 107–127; these read QDSL…ASEE and LARV…LQDA. The tract at residues 246-265 is disordered; sequence KLANERSESQRLSSGDEFQS.

The protein belongs to the COG7 family. As to quaternary structure, component of the conserved oligomeric Golgi complex which is composed of eight different subunits and is required for normal Golgi morphology and localization. Interacts with COG5 and COG6.

Its subcellular location is the golgi apparatus membrane. Its function is as follows. Required for normal Golgi function. Necessary for embryo development and pigmentation, especially for the expansion of cells and organs, and for the formation of the organized shoot apical meristem (SAM). Probably involved in the generation of the extra-cellular matrix. The sequence is that of Conserved oligomeric Golgi complex subunit 7 from Arabidopsis thaliana (Mouse-ear cress).